The chain runs to 312 residues: Protein phosphatase 2A catalytic subunit B (312 aa).

Mn(2+) contacts are provided by Asp-55, His-57, Asp-83, and Asn-115. Catalysis depends on His-116, which acts as the Proton donor. Residues His-165 and His-240 each coordinate Mn(2+).

It belongs to the PPP phosphatase family. PP-2A subfamily. Component of the Sca1 complex composed of at least gefA, gefH, scaA, phr, and the protein phosphatase 2A subunits pppA and pho2B. Mn(2+) serves as cofactor.

It localises to the cell membrane. It catalyses the reaction O-phospho-L-seryl-[protein] + H2O = L-seryl-[protein] + phosphate. The catalysed reaction is O-phospho-L-threonyl-[protein] + H2O = L-threonyl-[protein] + phosphate. Its function is as follows. Component of the Sca1 complex, a regulator of cell motility, chemotaxis and signal relay. The Sca1 complex is recruited to the plasma membrane in a chemoattractant- and F-actin-dependent manner and is enriched at the leading edge of chemotaxing cells where it regulates F-actin dynamics and signal relay by controlling the activation of rasC and the downstream target of rapamycin complex 2 (TORC2)-Akt/protein kinase B (PKB) pathway. This Dictyostelium discoideum (Social amoeba) protein is Protein phosphatase 2A catalytic subunit B.